Consider the following 1901-residue polypeptide: Methylcytosine dioxygenase tet3 (1901 aa).

A CXXC-type zinc finger spans residues 58 to 99 (SNKKRKRCGVCVPCLRKEPCGACYNCVNRSTSHQICKMRKCE). Residues Cys65, Cys68, Cys71, Cys77, Cys80, Cys83, Cys93, and Cys98 each coordinate Zn(2+). Disordered stretches follow at residues 434–455 (KNALPVPQSPRQTSWEQNKKSS), 602–658 (WWVP…EGSA), 751–787 (KDQCPTPSTHDTSSSSGQGDSANQHTNVSDVPGQNDL), and 808–867 (DFSL…PVSR). Polar residues-rich tracts occupy residues 442 to 455 (SPRQTSWEQNKKSS) and 602 to 614 (WWVPSSQQAPVSK). Over residues 640-652 (KPQRKQVQIKKPK) the composition is skewed to basic residues. Residues 758–771 (STHDTSSSSGQGDS) are compositionally biased toward low complexity. Over residues 847–867 (ENSTKPATHSNPALSNNPVSR) the composition is skewed to polar residues. Zn(2+) contacts are provided by Cys957, Cys959, Cys1017, His1043, and Cys1045. Arg1085 is a 2-oxoglutarate binding site. Cys1095, Cys1097, Cys1113, Cys1122, and Cys1182 together coordinate Zn(2+). Residue Cys1198 coordinates 2-oxoglutarate. His1204 is a Zn(2+) binding site. His1206 and Asp1208 together coordinate Fe cation. His1240 is a 2-oxoglutarate binding site. Disordered regions lie at residues 1282–1338 (SEPA…QQTK), 1457–1501 (YGSE…VETT), 1591–1624 (SNAPGLKDKQWPPYGTDVSVRQHDSLDSQSPGKV), and 1680–1745 (SATP…DEEI). Residues 1291-1325 (RQLEAKKAAAEKKKLQKEKLVSPDKTKQEPSDKKT) are compositionally biased toward basic and acidic residues. The segment covering 1326–1338 (CQQNPGVPQQQTK) has biased composition (polar residues). Over residues 1465 to 1474 (SFRRSSEVPH) the composition is skewed to basic and acidic residues. The span at 1477-1487 (SLQNPSSQKSV) shows a compositional bias: polar residues. Polar residues-rich tracts occupy residues 1680-1693 (SATPSDRSSITPCS) and 1702-1719 (SFPNPTVNSLKTDSSQNH). Position 1780 (His1780) interacts with Fe cation. 1795-1797 (RIS) contributes to the 2-oxoglutarate binding site.

The protein belongs to the TET family. The cofactor is Fe(2+). Requires Zn(2+) as cofactor.

The protein resides in the nucleus. Its subcellular location is the chromosome. The catalysed reaction is a 5-methyl-2'-deoxycytidine in DNA + 2-oxoglutarate + O2 = a 5-hydroxymethyl-2'-deoxycytidine in DNA + succinate + CO2. It catalyses the reaction a 5-hydroxymethyl-2'-deoxycytidine in DNA + 2-oxoglutarate + O2 = a 5-formyl-2'-deoxycytidine in DNA + succinate + CO2 + H2O. It carries out the reaction a 5-formyl-2'-deoxycytidine in DNA + 2-oxoglutarate + O2 = a 5-carboxyl-2'-deoxycytidine in DNA + succinate + CO2 + H(+). In terms of biological role, dioxygenase that catalyzes the conversion of the modified genomic base 5-methylcytosine (5mC) into 5-hydroxymethylcytosine (5hmC) and plays a key role in epigenetic chromatin reprogramming during embryonic development. Conversion of 5mC into 5hmC probably constitutes the first step in cytosine demethylation. Selectively binds to the promoter region of target genes and contributes to regulate the expression of numerous developmental genes, including pax6, rax, sox9 and six3. May also contribute to the regulation of target genes in ways that do not require its enzyme activity. In Xenopus tropicalis (Western clawed frog), this protein is Methylcytosine dioxygenase tet3.